Here is a 262-residue protein sequence, read N- to C-terminus: Acyl-[acyl-carrier-protein]--UDP-N-acetylglucosamine O-acyltransferase (262 aa).

The protein belongs to the transferase hexapeptide repeat family. LpxA subfamily. In terms of assembly, homotrimer.

The protein resides in the cytoplasm. The enzyme catalyses a (3R)-hydroxyacyl-[ACP] + UDP-N-acetyl-alpha-D-glucosamine = a UDP-3-O-[(3R)-3-hydroxyacyl]-N-acetyl-alpha-D-glucosamine + holo-[ACP]. The protein operates within glycolipid biosynthesis; lipid IV(A) biosynthesis; lipid IV(A) from (3R)-3-hydroxytetradecanoyl-[acyl-carrier-protein] and UDP-N-acetyl-alpha-D-glucosamine: step 1/6. Its function is as follows. Involved in the biosynthesis of lipid A, a phosphorylated glycolipid that anchors the lipopolysaccharide to the outer membrane of the cell. The polypeptide is Acyl-[acyl-carrier-protein]--UDP-N-acetylglucosamine O-acyltransferase (Yersinia enterocolitica serotype O:8 / biotype 1B (strain NCTC 13174 / 8081)).